A 232-amino-acid polypeptide reads, in one-letter code: Lipid A 1-phosphatase (232 aa).

The next 6 membrane-spanning stretches (helical) occupy residues 10–30 (LFIT…PVGA), 42–62 (ELLT…LLFF), 80–100 (ALYV…SGLL), 136–156 (FPSG…LLFP), 160–180 (VAFI…GAHY), and 183–203 (DVIA…IVYA).

The protein belongs to the lipid A LpxE 1-phosphatase family.

It localises to the cell inner membrane. It participates in bacterial outer membrane biogenesis; LPS lipid A biosynthesis. In terms of biological role, probably removes the 1-phosphate moiety from lipid A species. Does not seem to act on other membrane components, nor does it dephosphorylate the 4'-phosphate group of lipid A and/or lipid A precursors. The chain is Lipid A 1-phosphatase from Rhizobium etli (strain ATCC 51251 / DSM 11541 / JCM 21823 / NBRC 15573 / CFN 42).